We begin with the raw amino-acid sequence, 241 residues long: Putative hydrolase 080R (241 aa).

The Nudix hydrolase domain occupies 50–241 (FPDLSFNLMV…VIKVQKIMIL (192 aa)). The Nudix box motif lies at 136 to 157 (GHCNGNEPVLSTLLREFREETT). Mg(2+) is bound by residues E151, E155, and D204.

It belongs to the Nudix hydrolase family.

In Aedes vexans (Inland floodwater mosquito), this protein is Putative hydrolase 080R.